The following is a 708-amino-acid chain: Leucine-rich repeat neuronal protein 3 (708 aa).

The N-terminal stretch at 1–22 is a signal peptide; it reads MKDMPLRIHVLLGLAITTLVQA. The region spanning 23–69 is the LRRNT domain; that stretch reads VDKKVDCPRLCTCEIRPWFTPRSIYMEASTVDCNDLGLLTFPARLPA. Topologically, residues 23–628 are extracellular; it reads VDKKVDCPRL…KEYEKNNTTT (606 aa). 12 LRR repeats span residues 70-91, 93-114, 117-138, 141-162, 165-186, 189-210, 213-234, 237-258, 261-282, 285-304, 310-332, and 335-358; these read NTQILLLQTNNIAKIEYSTDFP, NLTGLDLSQNNLSSVTNINVKK, QLLSVYLEENKLTELPEKCLSE, NLQELYINHNLLSTISPGAFIG, NLLRLHLNSNRLQMINSKWFDA, NLEILMIGENPIIRIKDMNFKP, NLRSLVIAGINLTEIPDNALVG, NLESISFYDNRLIKVPHVALQK, NLKFLDLNKNPINRIRRGDFSN, HLKELGINNMPELISIDSLA, DLRKIEATNNPRLSYIHPNAFFR, and KLESLMLNSNALSALYHGTIESLP. 2 N-linked (GlcNAc...) asparagine glycosylation sites follow: Asn93 and Asn103. Asn223 is a glycosylation site (N-linked (GlcNAc...) asparagine). The 54-residue stretch at 368 to 421 folds into the LRRCT domain; the sequence is NPIRCDCVIRWMNMNKTNIRFMEPDSLFCVDPPEFQGQNVRQVHFRDMMEICLP. Asn382 carries an N-linked (GlcNAc...) asparagine glycan. Residues 421–514 form the Ig-like C2-type domain; sequence PLIAPESFPS…DLKSVMIKVD (94 aa). A disulfide bridge connects residues Cys444 and Cys496. Asn522, Asn579, Asn608, Asn624, and Asn625 each carry an N-linked (GlcNAc...) asparagine glycan. Residues 523–617 form the Fibronectin type-III domain; that stretch reads GSLNIKIRDI…NVTTKGLHPD (95 aa). A helical transmembrane segment spans residues 629–649; sequence LMACLGGLLGIIGVICLISCL. Over 650–708 the chain is Cytoplasmic; the sequence is SPEMNCDGGHSYVRNYLQKPTFALGELYPPLINLWEAGKEKSTSLKVKATVIGLPTNMS.

It localises to the membrane. The sequence is that of Leucine-rich repeat neuronal protein 3 (LRRN3) from Homo sapiens (Human).